Here is a 464-residue protein sequence, read N- to C-terminus: Rab GDP-dissociation inhibitor (464 aa).

This sequence belongs to the Rab GDI family. As to quaternary structure, interacts with the GDP-bound form of Rab GTPase YPT7.

In terms of biological role, regulates the GDP/GTP exchange reaction of YPT7 by inhibiting the dissociation of GDP from it, and the subsequent binding of GTP to YTP7. The chain is Rab GDP-dissociation inhibitor (GDI1) from Pyricularia oryzae (strain 70-15 / ATCC MYA-4617 / FGSC 8958) (Rice blast fungus).